The chain runs to 595 residues: 2-succinyl-5-enolpyruvyl-6-hydroxy-3-cyclohexene-1-carboxylate synthase (595 aa).

This sequence belongs to the TPP enzyme family. MenD subfamily. In terms of assembly, homodimer. Requires Mg(2+) as cofactor. Mn(2+) is required as a cofactor. Thiamine diphosphate serves as cofactor.

It catalyses the reaction isochorismate + 2-oxoglutarate + H(+) = 5-enolpyruvoyl-6-hydroxy-2-succinyl-cyclohex-3-ene-1-carboxylate + CO2. Its pathway is quinol/quinone metabolism; 1,4-dihydroxy-2-naphthoate biosynthesis; 1,4-dihydroxy-2-naphthoate from chorismate: step 2/7. It functions in the pathway cofactor biosynthesis; phylloquinone biosynthesis. In terms of biological role, catalyzes the thiamine diphosphate-dependent decarboxylation of 2-oxoglutarate and the subsequent addition of the resulting succinic semialdehyde-thiamine pyrophosphate anion to isochorismate to yield 2-succinyl-5-enolpyruvyl-6-hydroxy-3-cyclohexene-1-carboxylate (SEPHCHC). This is 2-succinyl-5-enolpyruvyl-6-hydroxy-3-cyclohexene-1-carboxylate synthase from Synechocystis sp. (strain ATCC 27184 / PCC 6803 / Kazusa).